The sequence spans 73 residues: Adipokinetic prohormone type 2 (73 aa).

The N-terminal stretch at 1-20 (MCRIFIVLLVVAALAIIIEG) is a signal peptide. Glutamine 21 bears the Pyrrolidone carboxylic acid mark. Asparagine 30 is subject to Asparagine amide. Residues 34–73 (SISSEQINDDCNPEEAIFQIYKLIVSEGERIRACQRDGKM) constitute a propeptide that is removed on maturation.

As to expression, expressed in corpora cardiaca (CC), corpora allata (CA) and gnathal ganglion (GNG) (at protein level). Expression in CC and CA detected in all animals, expression in GNG detected in few animals (at protein level). Not expressed in antennal lobe (AL) (at protein level).

Its subcellular location is the secreted. This hormone, released from cells in the corpora cardiaca, causes release of diglycerides from the fat body and stimulation of muscles to use these diglycerides as an energy source during energy-demanding processes. The polypeptide is Adipokinetic prohormone type 2 (Agrotis ipsilon (Black cutworm moth)).